A 523-amino-acid polypeptide reads, in one-letter code: Solute carrier family 35 member F5 (523 aa).

The next 2 membrane-spanning stretches (helical) occupy residues 69 to 89 (MALGIVILLLVDVIWVASSEL) and 101 to 121 (FFSTFAKTSMFVLYLLGFIIW). S207 carries the phosphoserine modification. 8 consecutive transmembrane segments (helical) span residues 243–263 (ISFFFCFVWFLANLSYQEALS), 268–288 (AIVNILSSTSGLFTLILAAVF), 296–316 (FTLSKLLAVILSIGGVVLVNL), 327–347 (TIGSIWSLAGAMLYAVYIVMI), 361–381 (MFFGFVGLFNLLLLWPGFFLL), 395–415 (VVLMCIIINGLIGTVLSEFLW), 420–440 (FLTSSLIGTLALSLTIPLSII), and 452–472 (WLFFAGAIPVFFSFFIVTLLC). The EamA domain maps to 252–316 (FLANLSYQEA…SIGGVVLVNL (65 aa)).

It belongs to the SLC35F solute transporter family.

The protein resides in the membrane. Functionally, putative solute transporter. This is Solute carrier family 35 member F5 (SLC35F5) from Pongo abelii (Sumatran orangutan).